The chain runs to 185 residues: Ribosome-recycling factor (185 aa).

Belongs to the RRF family.

The protein localises to the cytoplasm. Responsible for the release of ribosomes from messenger RNA at the termination of protein biosynthesis. May increase the efficiency of translation by recycling ribosomes from one round of translation to another. In Streptococcus pneumoniae (strain P1031), this protein is Ribosome-recycling factor.